The following is a 224-amino-acid chain: Protein DCL, chloroplastic (224 aa).

Residues 1–50 (MASICTSNFHFLCRKNNSSPISHHLLLSPSSLSFSRCGGLRLCRCAAVKT) constitute a chloroplast transit peptide. Residues 76 to 98 (TTSESEELVKEESDDEVGKKSGD) are disordered. Basic and acidic residues predominate over residues 82–98 (ELVKEESDDEVGKKSGD).

It is found in the plastid. It localises to the chloroplast. Has a function in the early stage of chloroplast development and palisade cell morphogenesis. Required for correct plastid ribosome assembly. Required for processing and maturation of 4.5S rRNA. This chain is Protein DCL, chloroplastic (DCL), found in Solanum lycopersicum (Tomato).